The chain runs to 185 residues: UPF0200 protein TK1334 (185 aa).

7–14 provides a ligand contact to ATP; sequence GMPGSGKS.

The protein belongs to the UPF0200 family.

The sequence is that of UPF0200 protein TK1334 from Thermococcus kodakarensis (strain ATCC BAA-918 / JCM 12380 / KOD1) (Pyrococcus kodakaraensis (strain KOD1)).